The chain runs to 545 residues: GPI transamidase component PIG-T homolog (545 aa).

The first 22 residues, 1–22 (MKKNGCLLLFAYSLLSFSLTAA), serve as a signal peptide directing secretion. Residues 23–493 (TIDETYDESL…PTPDFSMPYN (471 aa)) are Lumenal-facing. N-linked (GlcNAc...) asparagine glycosylation is found at asparagine 168, asparagine 227, asparagine 336, asparagine 391, and asparagine 467. The chain crosses the membrane as a helical span at residues 494 to 514 (VIIFTSTVIALTFGGIFNLLT). Residues 515–545 (RRFVPQQSKFQNRQPSMLQRLKEKIFHKKRG) lie on the Cytoplasmic side of the membrane.

Belongs to the PIGT family. Forms a complex with PIG-S homolog, PIG-U homolog and GPI8. In terms of processing, the disulfide bond between PIGK/GPI8 and PIGT is important for normal enzyme activity.

The protein resides in the endoplasmic reticulum membrane. The protein operates within glycolipid biosynthesis; glycosylphosphatidylinositol-anchor biosynthesis. Its function is as follows. Component of the GPI transamidase complex. Involved in transfer of GPI to proteins. The protein is GPI transamidase component PIG-T homolog (gpi16) of Schizosaccharomyces pombe (strain 972 / ATCC 24843) (Fission yeast).